A 751-amino-acid polypeptide reads, in one-letter code: Fusarisetin A cluster transcription factor fsa6 (751 aa).

The interval 1-35 (MADQAQDVRPTEWGPGKTPQGRARLPSSRPREKPQ) is disordered. Positions 38–66 (CNLCRRRKLRCDRQRPCSSCAQRELGLSC) form a DNA-binding region, zn(2)-C6 fungal-type. The span at 107 to 116 (NVNAQDQVGA) shows a compositional bias: polar residues. The disordered stretch occupies residues 107–153 (NVNAQDQVGATPSPRGQPRGPDYPTPAAVHAPSTNEEPVSAAVSPAD).

It localises to the nucleus. Its function is as follows. Transcription factor that regulates the expression of the gene cluster that mediates the biosynthesis of fusarisetin A. This is Fusarisetin A cluster transcription factor fsa6 from Fusarium sp. (strain FN080326).